Here is a 248-residue protein sequence, read N- to C-terminus: 2,3-bisphosphoglycerate-dependent phosphoglycerate mutase (248 aa).

Substrate-binding positions include 10–17 (RHGQSEWN), 23–24 (TG), Arg-62, 89–92 (ERHY), Lys-100, 116–117 (RR), and 183–184 (GN). His-11 acts as the Tele-phosphohistidine intermediate in catalysis. The active-site Proton donor/acceptor is the Glu-89.

This sequence belongs to the phosphoglycerate mutase family. BPG-dependent PGAM subfamily.

The enzyme catalyses (2R)-2-phosphoglycerate = (2R)-3-phosphoglycerate. It functions in the pathway carbohydrate degradation; glycolysis; pyruvate from D-glyceraldehyde 3-phosphate: step 3/5. Catalyzes the interconversion of 2-phosphoglycerate and 3-phosphoglycerate. The protein is 2,3-bisphosphoglycerate-dependent phosphoglycerate mutase of Corynebacterium glutamicum (strain ATCC 13032 / DSM 20300 / JCM 1318 / BCRC 11384 / CCUG 27702 / LMG 3730 / NBRC 12168 / NCIMB 10025 / NRRL B-2784 / 534).